The primary structure comprises 280 residues: 4-deoxy-L-threo-5-hexosulose-uronate ketol-isomerase (280 aa).

Positions 198, 200, 205, and 247 each coordinate Zn(2+).

It belongs to the KduI family. Zn(2+) is required as a cofactor.

It carries out the reaction 5-dehydro-4-deoxy-D-glucuronate = 3-deoxy-D-glycero-2,5-hexodiulosonate. It participates in glycan metabolism; pectin degradation; 2-dehydro-3-deoxy-D-gluconate from pectin: step 4/5. Functionally, catalyzes the isomerization of 5-dehydro-4-deoxy-D-glucuronate to 3-deoxy-D-glycero-2,5-hexodiulosonate. The polypeptide is 4-deoxy-L-threo-5-hexosulose-uronate ketol-isomerase (Lachnospira eligens (strain ATCC 27750 / DSM 3376 / VPI C15-48 / C15-B4) (Eubacterium eligens)).